Here is a 58-residue protein sequence, read N- to C-terminus: uncharacterized protein (58 aa).

2 disordered regions span residues 1–20 (MKKN…MNKK) and 38–58 (IIET…KKQQ).

This is an uncharacterized protein from Bacillus subtilis (strain 168).